Reading from the N-terminus, the 458-residue chain is ATP synthase subunit beta (458 aa).

147 to 154 (GGAGVGKT) is a binding site for ATP.

The protein belongs to the ATPase alpha/beta chains family. In terms of assembly, F-type ATPases have 2 components, CF(1) - the catalytic core - and CF(0) - the membrane proton channel. CF(1) has five subunits: alpha(3), beta(3), gamma(1), delta(1), epsilon(1). CF(0) has three main subunits: a(1), b(2) and c(9-12). The alpha and beta chains form an alternating ring which encloses part of the gamma chain. CF(1) is attached to CF(0) by a central stalk formed by the gamma and epsilon chains, while a peripheral stalk is formed by the delta and b chains.

The protein localises to the cell inner membrane. It carries out the reaction ATP + H2O + 4 H(+)(in) = ADP + phosphate + 5 H(+)(out). Produces ATP from ADP in the presence of a proton gradient across the membrane. The catalytic sites are hosted primarily by the beta subunits. The protein is ATP synthase subunit beta of Chromohalobacter salexigens (strain ATCC BAA-138 / DSM 3043 / CIP 106854 / NCIMB 13768 / 1H11).